The primary structure comprises 278 residues: Elongation factor Ts 1, mitochondrial (278 aa).

This sequence belongs to the EF-Ts family.

Its subcellular location is the mitochondrion. Associates with the EF-Tu.GDP complex and induces the exchange of GDP to GTP. It remains bound to the aminoacyl-tRNA.EF-Tu.GTP complex up to the GTP hydrolysis stage on the ribosome. The sequence is that of Elongation factor Ts 1, mitochondrial from Trypanosoma cruzi (strain CL Brener).